The sequence spans 114 residues: Class I hydrophobin SC16 (114 aa).

Positions methionine 1–alanine 17 are cleaved as a signal peptide. Disulfide bonds link cysteine 33/cysteine 93, cysteine 40/cysteine 87, cysteine 41/cysteine 74, and cysteine 94/cysteine 107. A glycan (N-linked (GlcNAc...) asparagine) is linked at asparagine 42.

This sequence belongs to the fungal hydrophobin family. Self-assembles to form functional amyloid fibrils called rodlets. Self-assembly into fibrillar rodlets occurs spontaneously at hydrophobic:hydrophilic interfaces and the rodlets further associate laterally to form amphipathic monolayers.

It localises to the secreted. Its subcellular location is the cell wall. In terms of biological role, aerial growth, conidiation, and dispersal of filamentous fungi in the environment rely upon a capability of their secreting small amphipathic proteins called hydrophobins (HPBs) with low sequence identity. Class I can self-assemble into an outermost layer of rodlet bundles on aerial cell surfaces, conferring cellular hydrophobicity that supports fungal growth, development and dispersal; whereas Class II form highly ordered films at water-air interfaces through intermolecular interactions but contribute nothing to the rodlet structure. The chain is Class I hydrophobin SC16 from Schizophyllum commune (strain H4-8 / FGSC 9210) (Split gill fungus).